Consider the following 337-residue polypeptide: tRNA N6-adenosine threonylcarbamoyltransferase (337 aa).

Residues histidine 111 and histidine 115 each contribute to the Fe cation site. Residues 134–138 (LVSGG), aspartate 167, glycine 180, and asparagine 272 each bind substrate. Aspartate 300 serves as a coordination point for Fe cation.

It belongs to the KAE1 / TsaD family. It depends on Fe(2+) as a cofactor.

It localises to the cytoplasm. It carries out the reaction L-threonylcarbamoyladenylate + adenosine(37) in tRNA = N(6)-L-threonylcarbamoyladenosine(37) in tRNA + AMP + H(+). Required for the formation of a threonylcarbamoyl group on adenosine at position 37 (t(6)A37) in tRNAs that read codons beginning with adenine. Is involved in the transfer of the threonylcarbamoyl moiety of threonylcarbamoyl-AMP (TC-AMP) to the N6 group of A37, together with TsaE and TsaB. TsaD likely plays a direct catalytic role in this reaction. This Shewanella sediminis (strain HAW-EB3) protein is tRNA N6-adenosine threonylcarbamoyltransferase.